The chain runs to 424 residues: Enolase (424 aa).

(2R)-2-phosphoglycerate is bound at residue Q162. E204 functions as the Proton donor in the catalytic mechanism. Mg(2+)-binding residues include D241, E284, and D311. Residues K336, R365, S366, and K387 each coordinate (2R)-2-phosphoglycerate. Catalysis depends on K336, which acts as the Proton acceptor.

Belongs to the enolase family. The cofactor is Mg(2+).

It is found in the cytoplasm. The protein resides in the secreted. It localises to the cell surface. It carries out the reaction (2R)-2-phosphoglycerate = phosphoenolpyruvate + H2O. The protein operates within carbohydrate degradation; glycolysis; pyruvate from D-glyceraldehyde 3-phosphate: step 4/5. Catalyzes the reversible conversion of 2-phosphoglycerate (2-PG) into phosphoenolpyruvate (PEP). It is essential for the degradation of carbohydrates via glycolysis. The polypeptide is Enolase (Rhizobium etli (strain ATCC 51251 / DSM 11541 / JCM 21823 / NBRC 15573 / CFN 42)).